We begin with the raw amino-acid sequence, 391 residues long: MMANNCNLVSVLCVILVLTLFHNPITVAGQNSPVVALFTFGDSNFDAGNKQTLTKTLVAQGFWPYGKSRDDPNGKFSDGLITPDFLAKFMKIPLAIAPALQPNVNVSRGASFAVEGATLLGAPVESMTLNQQVKKFNQMKAANWNDDFVAKSVFMIYIGANDYLNFTKNNPTADASAQQAFVTSVTNKLKNDISALYSSGASKFVIQTLAPLGCLPIVRQEYNTGMDQCYEKLNDLAKQHNEKIGPMLNEMARNSPASAPFQFTVFDFYNAVLTRTQRNQNFRFFVTNASCCGVGSHDAYGCGLPNVHSKLCEYQRSFLFFDGRHNSEKAQEMFAHLLFGADTNVVQPMNVRELTVYPVDEPMREFWVPPTPATVHASDSSSSTSRGYEYY.

The signal sequence occupies residues Met1 to Gly29. Residue Ser43 is the Nucleophile of the active site. 3 N-linked (GlcNAc...) asparagine glycosylation sites follow: Asn105, Asn165, and Asn288. Residues Asp322 and His325 contribute to the active site. Residues Pro372 to Tyr391 form a disordered region.

This sequence belongs to the 'GDSL' lipolytic enzyme family. Component of the PYK10 complex, at least composed of PYK10/BGLU23, BGLU21, BGLU22, JAL22, JAL23, PBP1/JAL30, PBP2/JAL31, JAL32, JAL33, JAL34, JAL35, GLL22 and GLL23.

The protein localises to the secreted. The protein is GDSL esterase/lipase 22 (GLL22) of Arabidopsis thaliana (Mouse-ear cress).